A 658-amino-acid polypeptide reads, in one-letter code: Staphylocoagulase (658 aa).

Residues 1–26 (MKKQIISLGALAVASSLFTWDNKADA) form the signal peptide. Polar residues-rich tracts occupy residues 391-406 (MEQN…TQPT), 428-440 (GTES…QGES), 499-514 (PSET…QDGT), and 521-531 (PTQNKPSETNA). Residues 391-531 (MEQNRPSLSD…TQNKPSETNA (141 aa)) are disordered. 6 consecutive repeat copies span residues 492–518 (ARPR…VSYG), 519–545 (ARPT…VSYG), 546–572 (ARPT…VSYG), 573–599 (ARPT…VSYG), 600–626 (ARPT…VSYG), and 627–653 (ARPT…ATYG). Positions 492 to 653 (ARPRFNKPSE…THADGTATYG (162 aa)) are 6 X 27 AA tandem repeats of A-R-P-[RT]-[FQY]-[NK]-K-P-S-[EK]-T-N-A-Y-N-V-T-T-[NH]-[QA]-[DN]-G-[TQ]-[VA]-[ST]-Y-G. Positions 619–658 (ANGQVSYGARPTQKKPSETNAYNVTTHADGTATYGPRVTK) are disordered. Residues 636-646 (ETNAYNVTTHA) are compositionally biased toward polar residues.

This sequence belongs to the staphylocoagulase family.

In terms of biological role, staphylocoagulase is an extracellular protein which specifically forms a complex with human prothrombin. This complex named staphylothrombin can clot fibrinogen without any proteolytic cleavage of prothrombin. This chain is Staphylocoagulase, found in Staphylococcus aureus.